The chain runs to 259 residues: MNLLEKTRKINSMLQASAGKPVNFKEMADTLGDIIDSNVYILSRKGKLLGISIHQQIENERMKKMFEERQFPEEYTHSLFTISETSSNLDIHNEHTAFPVENKDLFQNALTTIVPIVGGGERLGTLILARLSSQFEDDDLILAEYGATVVGMEILREKSEEIEEEARSKAVVQMAINSLSYSELEAIEHIFEELDGNEGLLVASKIADRVGITRSVIVNALRKLESAGVIESRSLGMKGTYIKVLNDKFLNALAEIKMK.

Residues 1–155 (MNLLEKTRKI…GATVVGMEIL (155 aa)) form a GAF domain region. Positions 203–222 (ASKIADRVGITRSVIVNALR) form a DNA-binding region, H-T-H motif. Position 215 is a phosphoserine (serine 215).

The protein belongs to the CodY family.

It is found in the cytoplasm. In terms of biological role, DNA-binding global transcriptional regulator which is involved in the adaptive response to starvation and acts by directly or indirectly controlling the expression of numerous genes in response to nutrient availability. During rapid exponential growth, CodY is highly active and represses genes whose products allow adaptation to nutrient depletion. The protein is Global transcriptional regulator CodY of Lysinibacillus sphaericus (strain C3-41).